Reading from the N-terminus, the 209-residue chain is Bacteriorhodopsin (209 aa).

A helical membrane pass occupies residues 1–17 (LWLGTAGMFLGMLYFIA). The Cytoplasmic segment spans residues 18–31 (RGWGETDGRRQKFY). The helical transmembrane segment at 32 to 50 (IATILITAIAFVNYLAMAL) threads the bilayer. Residues 51 to 66 (GFGLTFIEFGGEQHPI) are Extracellular-facing. A helical membrane pass occupies residues 67-84 (YWARYTDWLFTTPLLLYD). Topologically, residues 85-95 (LGLLAGADRNT) are cytoplasmic. Residues 96–115 (IYSLVSLDVLMIGTGVVATL) traverse the membrane as a helical segment. Residues 116-128 (SAGSGVLSAGAER) lie on the Extracellular side of the membrane. The helical transmembrane segment at 129–148 (LVWWGISTAFLLVLLYFLFS) threads the bilayer. Residues 149–166 (SLSGRVANLPSDTRSTFK) are Cytoplasmic-facing. Residues 167 to 185 (TLRNLVTVVWLVYPVWWLV) traverse the membrane as a helical segment. Topologically, residues 186–197 (GSEGLGLVGIGI) are extracellular. The chain crosses the membrane as a helical span at residues 198 to 209 (ETAGFMVIDLVA).

The protein belongs to the archaeal/bacterial/fungal opsin family.

The protein resides in the cell membrane. In terms of biological role, light-driven proton pump. The protein is Bacteriorhodopsin (bop) of Halobacterium halobium (strain shark).